A 276-amino-acid polypeptide reads, in one-letter code: Cytoplasmic envelopment protein 1 (276 aa).

It belongs to the herpesviridae cytoplasmic envelopment protein 1 family.

It localises to the virion. Its subcellular location is the virion tegument. It is found in the host cytoplasm. The protein resides in the host Golgi apparatus. In terms of biological role, plays a critical role in cytoplasmic virus egress. Participates in the final step of tegumentation and envelope acquisition within the host cytoplasm. The sequence is that of Cytoplasmic envelopment protein 1 (42) from Equus caballus (Horse).